A 102-amino-acid chain; its full sequence is NADH-quinone oxidoreductase subunit K 1 (102 aa).

3 helical membrane-spanning segments follow: residues 6–26 (LNAYVALSAVLFALGGIGVLV), 31–51 (LAILMCIELMLNAANLLFVAF), and 65–85 (FLVITVAAAEVAIGLALTVLL).

The protein belongs to the complex I subunit 4L family. In terms of assembly, NDH-1 is composed of 14 different subunits. Subunits NuoA, H, J, K, L, M, N constitute the membrane sector of the complex.

The protein resides in the cell membrane. The catalysed reaction is a quinone + NADH + 5 H(+)(in) = a quinol + NAD(+) + 4 H(+)(out). Functionally, NDH-1 shuttles electrons from NADH, via FMN and iron-sulfur (Fe-S) centers, to quinones in the respiratory chain. The immediate electron acceptor for the enzyme in this species is believed to be a menaquinone. Couples the redox reaction to proton translocation (for every two electrons transferred, four hydrogen ions are translocated across the cytoplasmic membrane), and thus conserves the redox energy in a proton gradient. The sequence is that of NADH-quinone oxidoreductase subunit K 1 from Symbiobacterium thermophilum (strain DSM 24528 / JCM 14929 / IAM 14863 / T).